Consider the following 361-residue polypeptide: Zinc transporter ZIP13 (361 aa).

Residues 1-6 (MPGCPC) lie on the Lumenal side of the membrane. Residues 7–27 (PGCGMAGQRLLFLTVLALELL) form a helical membrane-spanning segment. Topologically, residues 28 to 68 (ERAGGSQPALRSLGAAAACRLDNKESESWGALLSGERLDTW) are cytoplasmic. A helical transmembrane segment spans residues 69 to 89 (ICSLLGSLMVGLSGVFPLLVI). The Lumenal portion of the chain corresponds to 90–108 (PLEMGTLLQSEAGAWRLRQ). Residues 109 to 129 (LLSFALGGLLGNVFLHLLPEA) form a helical membrane-spanning segment. At 130–150 (WAYTCNITPGGEGQSLQRQQQ) the chain is on the cytoplasmic side. A helical transmembrane segment spans residues 151-171 (LGLWVIAGFLTFLALEKMFLN). Residues 172–232 (SKEDPSQAPS…TIDNFTHGLA (61 aa)) lie on the Lumenal side of the membrane. The helical transmembrane segment at 233–253 (VAASFLVSKKIGLLTTMAILL) threads the bilayer. An XEXPHE-motif motif is present at residues 254–259 (HEIPHE). At 254–275 (HEIPHEVGDFAILLRAGFDRWT) the chain is on the cytoplasmic side. Residues 276–296 (AAKLQFSTALGGLLGACFAIC) traverse the membrane as a helical segment. Over 297-306 (TQSPKGVEET) the chain is Lumenal. Residues 307–327 (VVWILPFTSGGFLYIALVNVL) form a helical membrane-spanning segment. The Cytoplasmic portion of the chain corresponds to 328-339 (PDLLEEDDPWHS). The chain crosses the membrane as a helical span at residues 340-360 (LQQVLLLCSGVLVMVLLSLFV). E361 is a topological domain (lumenal).

This sequence belongs to the ZIP transporter (TC 2.A.5) family. As to quaternary structure, homodimer. Highly expressed in some tissues such as bone and eye. Expressed in osteoblasts of tibia and of alveolar bone, in proliferative zone of growth plate, and in odontoblasts on the forming of the dentine of crown in molar tooth. Also expressed fibroblasts in reticular layer of dermis of skin.

The protein localises to the golgi apparatus membrane. It is found in the cytoplasmic vesicle membrane. It localises to the endoplasmic reticulum membrane. It carries out the reaction Zn(2+)(in) = Zn(2+)(out). In terms of biological role, functions as a zinc transporter transporting Zn(2+) from the Golgi apparatus to the cytosol and thus influences the zinc level at least in areas of the cytosol. May regulate beige adipocyte differentiation. This Mus musculus (Mouse) protein is Zinc transporter ZIP13.